The following is a 321-amino-acid chain: Leucine-rich repeat-containing protein 46 (321 aa).

LRR repeat units follow at residues 45–66 (ELQT…EGLK), 67–88 (NLHS…ACVP), 89–110 (SLRF…LDLP), and 111–132 (CLQF…EFPQ). The region spanning 142–184 (NSCTNQDSYRELVIEALPLLLDLDGQPVMERWISDEEDEASSE) is the LRRCT domain. Phosphoserine occurs at positions 175 and 182. Positions 198 to 222 (RGFLKELEQELSRHREHRQQAALTQ) form a coiled coil. The segment at 235-321 (NLPLLPGVPM…TKTMAKRSKK (87 aa)) is disordered.

The protein resides in the cell projection. The protein localises to the cilium. It is found in the flagellum. Required for normal spermatogenesis and male fertility. Plays an important role in sperm flagellum biogenesis. The polypeptide is Leucine-rich repeat-containing protein 46 (LRRC46) (Macaca fascicularis (Crab-eating macaque)).